A 1464-amino-acid chain; its full sequence is Sister chromatid cohesion protein PDS5 homolog B-B (1464 aa).

An HEAT repeat occupies 383 to 419 (LLVNDQLLNFVRERTLDKRWRVRKEAMMGLAQIYKKY). A disordered region spans residues 1126–1464 (KSTNVLGAVN…MKSELEGPLL (339 aa)). The span at 1137-1155 (PLSSAGKQMQSKSSRMETV) shows a compositional bias: polar residues. Residues 1156 to 1168 (SNASSGSNPSSPG) show a composition bias toward low complexity. The span at 1177 to 1186 (TELDQIEYED) shows a compositional bias: acidic residues. Basic and acidic residues-rich tracts occupy residues 1197–1215 (KKSD…VEKP), 1234–1244 (ELSKPAQEPKS), and 1265–1274 (WQEKRLKEDL). The segment covering 1286–1295 (KKGRRGRPPK) has biased composition (basic residues). The segment at residues 1287–1299 (KGRRGRPPKSAKM) is a DNA-binding region (a.T hook 1). A compositionally biased stretch (acidic residues) spans 1325–1342 (PTDEEDHLEISEEQDSEN). Over residues 1347–1357 (RKGRGSSKKTP) the composition is skewed to basic residues. Residues 1359-1373 (KSDSTDSALDTSRPT) show a composition bias toward polar residues. 2 DNA-binding regions (a.T hook) span residues 1375-1387 (QKRR…TPTV) and 1391-1403 (KSHV…VVSK). The span at 1390–1400 (KKSHVGRPRKV) shows a compositional bias: basic residues. The segment covering 1425–1435 (SNEEETADEEV) has biased composition (acidic residues). Residues 1441–1453 (GRRRTAKKRRWIQ) are compositionally biased toward basic residues. The span at 1455–1464 (MKSELEGPLL) shows a compositional bias: basic and acidic residues.

The protein belongs to the PDS5 family. In terms of assembly, interacts with the cohesin complex. Post-translationally, phosphorylated in mitotic cells.

It is found in the nucleus. In terms of biological role, plays a role in androgen-induced proliferative arrest. Required for maintenance of sister chromatid cohesion during mitosis. The protein is Sister chromatid cohesion protein PDS5 homolog B-B (pds5b-b) of Xenopus laevis (African clawed frog).